The primary structure comprises 366 residues: Melatonin receptor type 1A (366 aa).

Residues 1-45 lie on the Extracellular side of the membrane; sequence MAGRLWGSPGGTPKGNGSSALLNVSQAAPGAGDGVRPRPSWLAAT. N-linked (GlcNAc...) asparagine glycosylation is found at Asn-16 and Asn-23. Residues 46-66 form a helical membrane-spanning segment; it reads LASILIFTIVVDIVGNLLVVL. Topologically, residues 67–79 are cytoplasmic; the sequence is SVYRNKKLRNAGN. A helical transmembrane segment spans residues 80–100; the sequence is VFVVSLAVADLLVAVYPYPLA. Residues 101 to 118 are Extracellular-facing; sequence LASIVNNGWSLSSLHCQL. Cysteines 116 and 193 form a disulfide. A helical membrane pass occupies residues 119–139; that stretch reads SGFLMGLSVIGSVFSITGIAI. The Cytoplasmic portion of the chain corresponds to 140–158; the sequence is NRYCCICHSLRYGKLYSGT. The helical transmembrane segment at 159-179 threads the bilayer; it reads NSLCYVFLIWTLTLVAIVPNL. Over 180–203 the chain is Extracellular; it reads CVGTLQYDPRIYSCTFTQSVSSAY. Residues 204 to 224 form a helical membrane-spanning segment; it reads TIAVVVFHFIVPMLVVVFCYL. Residues 225–256 are Cytoplasmic-facing; it reads RIWALVLQVRWKVKPDNKPKLKPQDFRNFVTM. Residues 257–277 traverse the membrane as a helical segment; the sequence is FVVFVLFAICWAPLNFIGLVV. The Extracellular portion of the chain corresponds to 278 to 290; it reads ASDPASMAPRIPE. The helical transmembrane segment at 291–311 threads the bilayer; it reads WLFVASYYMAYFNSCLNAIIY. The Cytoplasmic portion of the chain corresponds to 312–366; sequence GLLNQNFRQEYRKIIVSLCTTKMFFVDSSNHVADRIKRKPSPLIANHNLIKVDSV.

It belongs to the G-protein coupled receptor 1 family.

Its subcellular location is the cell membrane. High affinity receptor for melatonin. Likely to mediate the reproductive and circadian actions of melatonin. The activity of this receptor is mediated by pertussis toxin sensitive G proteins that inhibit adenylate cyclase activity. Possibly involved in sleep induction, by melatonin activation of the potassium channel KCNMA1/BK and the dissociation of G-beta and G-gamma subunits, thereby decreasing synaptic transmission. This chain is Melatonin receptor type 1A (MTNR1A), found in Ovis aries (Sheep).